We begin with the raw amino-acid sequence, 877 residues long: GTPase activating protein homolog 2 (877 aa).

The F-BAR domain occupies 14-285 (FKFTDNLWDG…SVEMIDITND (272 aa)). Positions 130–214 (QEGIKLKQDM…SNCDEEYREQ (85 aa)) form a coiled coil. The Rho-GAP domain occupies 374 to 560 (VSLDELMNRQ…TLIKQIPPPL (187 aa)). Disordered regions lie at residues 589–612 (DQLSNDDNNNSNTNTSNISIGSGS), 644–704 (LPPL…AEPT), and 749–800 (AATP…LAST). Low complexity-rich tracts occupy residues 593 to 612 (NDDNNNSNTNTSNISIGSGS), 653 to 676 (SGSGNESNSSSSNSTTTPTGSPTT), and 749 to 779 (AATPTTTTPTTTPTTTTSPTTATIPAVSTST). The span at 780-800 (IKTSSPDRTTPLTSSPPLAST) shows a compositional bias: polar residues.

It localises to the cytoplasm. Its subcellular location is the contractile vacuole. In terms of biological role, rho GTPase-activating protein involved in the signal transduction pathway. Regulator of the contractile vacuole network as well as involved in driving vacuole emptying. The protein is GTPase activating protein homolog 2 (mgp2) of Dictyostelium discoideum (Social amoeba).